Consider the following 1186-residue polypeptide: ATP-dependent helicase/deoxyribonuclease subunit B (1186 aa).

The protein belongs to the helicase family. AddB/RexB type 2 subfamily. As to quaternary structure, heterodimer of AddA and RexB. Mg(2+) is required as a cofactor.

The heterodimer acts as both an ATP-dependent DNA helicase and an ATP-dependent, dual-direction single-stranded exonuclease. Recognizes the chi site generating a DNA molecule suitable for the initiation of homologous recombination. This subunit has 5' -&gt; 3' nuclease activity but not helicase activity. In Latilactobacillus sakei subsp. sakei (strain 23K) (Lactobacillus sakei subsp. sakei), this protein is ATP-dependent helicase/deoxyribonuclease subunit B.